Reading from the N-terminus, the 328-residue chain is Galactinol synthase 10 (328 aa).

Lysine 106 is an active-site residue. Aspartate 122, aspartate 124, and histidine 248 together coordinate Mn(2+).

The protein belongs to the glycosyltransferase 8 family. Galactosyltransferase subfamily. It depends on a divalent metal cation as a cofactor.

It localises to the cytoplasm. The catalysed reaction is myo-inositol + UDP-alpha-D-galactose = alpha-D-galactosyl-(1-&gt;3)-1D-myo-inositol + UDP + H(+). Its function is as follows. Galactinol synthase involved in the biosynthesis of raffinose family oligosaccharides (RFOs) that function as osmoprotectants. May promote plant stress tolerance. In Arabidopsis thaliana (Mouse-ear cress), this protein is Galactinol synthase 10 (GOLS10).